Reading from the N-terminus, the 175-residue chain is Calcineurin subunit B (175 aa).

EF-hand domains lie at 21–56 (AEIE…SANP), 58–88 (AKRI…FSGR), 90–125 (ETDA…MVGT), and 131–166 (QLQQ…TEVI). Asp-34, Asp-36, Ser-38, Ser-40, Glu-45, Asp-66, Asp-68, Ser-70, Asp-72, Glu-77, Asp-103, Asp-105, Asp-107, Tyr-109, Glu-114, Asp-144, Asp-146, Asp-148, Lys-150, and Glu-155 together coordinate Ca(2+).

Belongs to the calcineurin regulatory subunit family. Composed of a catalytic subunit (A) and a regulatory subunit (B).

In terms of biological role, regulatory subunit of calcineurin, a calcium-dependent, calmodulin stimulated protein phosphatase. Confers calcium sensitivity. This is Calcineurin subunit B (CNB1) from Kluyveromyces lactis (strain ATCC 8585 / CBS 2359 / DSM 70799 / NBRC 1267 / NRRL Y-1140 / WM37) (Yeast).